A 575-amino-acid polypeptide reads, in one-letter code: Delta-1-pyrroline-5-carboxylate dehydrogenase, mitochondrial (575 aa).

Residue 297–302 (GKIQSG) participates in NAD(+) binding. E317 serves as the catalytic Proton acceptor. The active-site Nucleophile is C351.

It belongs to the aldehyde dehydrogenase family.

Its subcellular location is the mitochondrion inner membrane. The enzyme catalyses L-glutamate 5-semialdehyde + NAD(+) + H2O = L-glutamate + NADH + 2 H(+). The protein operates within amino-acid degradation; L-proline degradation into L-glutamate; L-glutamate from L-proline: step 2/2. The sequence is that of Delta-1-pyrroline-5-carboxylate dehydrogenase, mitochondrial (PUT2) from Saccharomyces cerevisiae (strain ATCC 204508 / S288c) (Baker's yeast).